The sequence spans 358 residues: 3-dehydroquinate synthase (358 aa).

NAD(+) is bound by residues 72 to 77 (GGERVK), 106 to 110 (GALLD), 130 to 131 (ST), K143, and K151. Zn(2+) contacts are provided by E184, H245, and H261.

The protein belongs to the sugar phosphate cyclases superfamily. Dehydroquinate synthase family. NAD(+) serves as cofactor. It depends on Co(2+) as a cofactor. Requires Zn(2+) as cofactor.

It is found in the cytoplasm. The enzyme catalyses 7-phospho-2-dehydro-3-deoxy-D-arabino-heptonate = 3-dehydroquinate + phosphate. It functions in the pathway metabolic intermediate biosynthesis; chorismate biosynthesis; chorismate from D-erythrose 4-phosphate and phosphoenolpyruvate: step 2/7. Its function is as follows. Catalyzes the conversion of 3-deoxy-D-arabino-heptulosonate 7-phosphate (DAHP) to dehydroquinate (DHQ). In Aeropyrum pernix (strain ATCC 700893 / DSM 11879 / JCM 9820 / NBRC 100138 / K1), this protein is 3-dehydroquinate synthase (aroB).